The sequence spans 689 residues: Centrosomal protein of 78 kDa (689 aa).

Ser325 and Ser327 each carry phosphoserine. Disordered stretches follow at residues Ser432 to Lys451, Pro563 to Gln589, and Asp614 to His689. Residues Glu450–Leu505 are a coiled coil. 2 stretches are compositionally biased toward basic and acidic residues: residues Pro573–Pro587 and Gln666–His689.

The protein belongs to the CEP78 family. In terms of assembly, interacts with PLK4. Interacts with FAM161A. Interacts with IFT20; regulating IFT20 stability and localization. Interacts with TTC21A; regulating TTC21A stability and localization. Interacts with USP16; promoting USP16-dependent deubiquitination of tektins. Interacts with DCAF1/VPRBP; promoting localization of the EDVP complex to centrosomes. Interacts with CEP350; promoting CEP78 localization to centrosome and centriole. Widely expressed. Expressed in different retinal cell types with higher expression in cone compared to rod cells (at protein level).

It localises to the cytoplasm. It is found in the cytoskeleton. The protein resides in the microtubule organizing center. The protein localises to the centrosome. Its subcellular location is the centriole. It localises to the cilium basal body. Centriole wall protein that localizes to mature centrioles and regulates centriole and cilia biogenesis. Involved in centrosome duplication: required for efficient PLK4 centrosomal localization and PLK4-induced overduplication of centrioles. Involved in cilium biogenesis and controls cilium length. Acts as a regulator of protein stability by preventing ubiquitination of centrosomal proteins, such as CCP110 and tektins. Associates with the EDVP complex, preventing ubiquitination and degradation of CCP110. Promotes deubiquitination of tektin proteins (TEKT1, TEKT2, TEK3, TEKT4 and TEKT5) via its interaction with USP16. The protein is Centrosomal protein of 78 kDa of Homo sapiens (Human).